A 951-amino-acid polypeptide reads, in one-letter code: Protocadherin-20 (951 aa).

Positions 1 to 60 (MRGRGNARSSQALGVSWCPATWHPRLDMGRLHRPRSSTSYRNLPHLFLFFLFVGPFSCLG) are cleaved as a signal peptide. Residues 61 to 890 (SYSRATELLY…VESVSCMPTL (830 aa)) lie on the Extracellular side of the membrane. Cadherin domains are found at residues 64–209 (RATE…APQF), 210–320 (PVSQ…CPLF), 321–535 (TDSQ…APIF), 536–639 (LQPL…SPRF), 640–742 (INKD…PPLV), and 746–863 (QSNM…EPEI). N-linked (GlcNAc...) asparagine glycosylation is present at Asn-135. N-linked (GlcNAc...) asparagine glycosylation is found at Asn-326 and Asn-332. N-linked (GlcNAc...) asparagine glycans are attached at residues Asn-680, Asn-748, Asn-803, Asn-844, and Asn-849. Residues 891–911 (VALSVISLGSITLVTGMGIYI) traverse the membrane as a helical segment. Topologically, residues 912-951 (CLRKGEKHPREDENLEVQIPLKGKIDLHMRERKPMDISNI) are cytoplasmic.

The protein resides in the cell membrane. In terms of biological role, potential calcium-dependent cell-adhesion protein. The protein is Protocadherin-20 (PCDH20) of Homo sapiens (Human).